A 319-amino-acid polypeptide reads, in one-letter code: MKRIGILTSGGDAPGMNAAIRAVTRTALANGIEVCGIRYGYAGLVAGDIFQMTSETVADKINRGGTFLYSARFPEFKEEEVQLKGIEQLKKHGIDALVVIGGDGSYHGALKLTRHGYNAVGLPGSIDNDIPYTDFTIGFDTACNTAMEAIDKIRDTATSHQRVFVVNVMGRDCGDIAMHVGVATGADAIVIPEEPYDIKEIAENLKQGFANGKKHGIVVLAEGVMDANKFKDELLKYGDFDARANILGHMQRGGSPTTRDRVLASEMGAYAVKLLLEGKGGLAVGIENNKLSHHDILDLFDAKHHGNYALYSLNKDLAK.

Gly-11 lines the ATP pocket. ADP is bound at residue Arg-21–Arg-25. ATP contacts are provided by residues Arg-72 to Phe-73 and Gly-102 to Ser-105. Asp-103 serves as a coordination point for Mg(2+). Position 125–127 (Ser-125–Asp-127) interacts with substrate. Residue Asp-127 is the Proton acceptor of the active site. Arg-154 is an ADP binding site. Substrate contacts are provided by residues Arg-162 and Met-169–Arg-171. Residues Gly-185–Asp-187 and Lys-213–His-215 contribute to the ADP site. Substrate is bound by residues Glu-222, Arg-243, and His-249–Arg-252.

Belongs to the phosphofructokinase type A (PFKA) family. ATP-dependent PFK group I subfamily. Prokaryotic clade 'B1' sub-subfamily. As to quaternary structure, homotetramer. The cofactor is Mg(2+).

Its subcellular location is the cytoplasm. The enzyme catalyses beta-D-fructose 6-phosphate + ATP = beta-D-fructose 1,6-bisphosphate + ADP + H(+). It functions in the pathway carbohydrate degradation; glycolysis; D-glyceraldehyde 3-phosphate and glycerone phosphate from D-glucose: step 3/4. With respect to regulation, allosterically activated by ADP and other diphosphonucleosides, and allosterically inhibited by phosphoenolpyruvate. Its function is as follows. Catalyzes the phosphorylation of D-fructose 6-phosphate to fructose 1,6-bisphosphate by ATP, the first committing step of glycolysis. The protein is ATP-dependent 6-phosphofructokinase of Lactobacillus gasseri (strain ATCC 33323 / DSM 20243 / BCRC 14619 / CIP 102991 / JCM 1131 / KCTC 3163 / NCIMB 11718 / NCTC 13722 / AM63).